The sequence spans 29 residues: Orphan peptide CllNtx (29 aa).

Contains 3 disulfide bonds. Expressed by the venom gland.

It localises to the secreted. Its function is as follows. May act as a toxin. This is Orphan peptide CllNtx from Centruroides limpidus (Mexican scorpion).